A 1300-amino-acid polypeptide reads, in one-letter code: Kinesin-like protein KIN-4C (1300 aa).

The Kinesin motor domain maps to 6–360; that stretch reads CVRVAVNIRP…LKYANRARNI (355 aa). 85–92 is a binding site for ATP; that stretch reads GQTGSGKT. Coiled coils occupy residues 580–615, 653–697, and 781–823; these read TSVL…LASI, QLMR…RAWK, and EVTV…AKIS. Composition is skewed to basic and acidic residues over residues 956 to 971 and 1001 to 1013; these read ADEN…KQET and EWKP…RESE. 4 disordered regions span residues 956–1018, 1097–1132, 1144–1187, and 1200–1300; these read ADEN…ESVI, NADG…QQQV, ALAD…RKKW, and PALP…TRRV. Composition is skewed to polar residues over residues 1169–1180, 1205–1222, 1230–1239, and 1275–1288; these read IGNTTGKSNVPR, THTN…TVDS, NSDSGESNSI, and GFVQ…SGSR. Positions 1289-1300 are enriched in basic and acidic residues; that stretch reads TSDEKENHTRRV.

This sequence belongs to the TRAFAC class myosin-kinesin ATPase superfamily. Kinesin family. KIN-4 subfamily. Homodimer.

Functionally, kinesin-like motor protein involved in the control of the oriented deposition of cellulose microfibrils. The chain is Kinesin-like protein KIN-4C from Arabidopsis thaliana (Mouse-ear cress).